A 296-amino-acid polypeptide reads, in one-letter code: Origin of replication complex subunit 6 (296 aa).

Residues 212–296 (PSKRKHDDDS…MALEVSSAAN (85 aa)) form a disordered region. A compositionally biased stretch (acidic residues) spans 220–236 (DSDSSGESSGDDQDELD). A compositionally biased stretch (polar residues) spans 254–264 (WKSSVLSSNKQ).

Belongs to the ORC6 family. In terms of assembly, component of the origin recognition complex (ORC) composed of at least ORC1, ORC2, ORC3, ORC4, ORC5 and ORC6. ORC is regulated in a cell-cycle and development dependent manner. It is sequentially assembled at the exit from anaphase of mitosis and disassembled as cells enter S phase.

It is found in the nucleus. Its function is as follows. Component of the origin recognition complex (ORC) that binds origins of replication. DNA-binding is ATP-dependent. The specific DNA sequences that define origins of replication have not been identified yet. ORC is required to assemble the pre-replication complex necessary to initiate DNA replication. The sequence is that of Origin of replication complex subunit 6 from Oryza sativa subsp. indica (Rice).